The chain runs to 217 residues: Large ribosomal subunit protein uL1 (217 aa).

The protein belongs to the universal ribosomal protein uL1 family. In terms of assembly, component of the large ribosomal subunit (LSU). Mature ribosomes consist of a small (40S) and a large (60S) subunit. The 40S subunit contains about 32 different proteins and 1 molecule of RNA (18S). The 60S subunit contains 45 different proteins and 3 molecules of RNA (25S, 5.8S and 5S). uL1 forms part of the L1 stalk.

The protein resides in the cytoplasm. Component of the ribosome, a large ribonucleoprotein complex responsible for the synthesis of proteins in the cell. The small ribosomal subunit (SSU) binds messenger RNAs (mRNAs) and translates the encoded message by selecting cognate aminoacyl-transfer RNA (tRNA) molecules. The large subunit (LSU) contains the ribosomal catalytic site termed the peptidyl transferase center (PTC), which catalyzes the formation of peptide bonds, thereby polymerizing the amino acids delivered by tRNAs into a polypeptide chain. The nascent polypeptides leave the ribosome through a tunnel in the LSU and interact with protein factors that function in enzymatic processing, targeting, and the membrane insertion of nascent chains at the exit of the ribosomal tunnel. uL1 forms part of the L1 stalk, a mobile element that plays a role in evacuating the exit-site tRNA. The chain is Large ribosomal subunit protein uL1 (RPL10A) from Candida albicans (strain SC5314 / ATCC MYA-2876) (Yeast).